The following is a 237-amino-acid chain: Ribonuclease 3 (237 aa).

Residues 6–133 (LIEVEKLIGI…VIAAVYLDKG (128 aa)) form the RNase III domain. E46 provides a ligand contact to Mg(2+). Residue D50 is part of the active site. Residues D119 and E122 each contribute to the Mg(2+) site. The active site involves E122. Residues 160 to 229 (DFKTRLQEVL…AKAALQRLGE (70 aa)) enclose the DRBM domain.

The protein belongs to the ribonuclease III family. As to quaternary structure, homodimer. Mg(2+) serves as cofactor.

It localises to the cytoplasm. The catalysed reaction is Endonucleolytic cleavage to 5'-phosphomonoester.. In terms of biological role, digests double-stranded RNA. Involved in the processing of primary rRNA transcript to yield the immediate precursors to the large and small rRNAs (23S and 16S). Processes some mRNAs, and tRNAs when they are encoded in the rRNA operon. Processes pre-crRNA and tracrRNA of type II CRISPR loci if present in the organism. The sequence is that of Ribonuclease 3 from Clostridium perfringens (strain 13 / Type A).